We begin with the raw amino-acid sequence, 173 residues long: Co-chaperone protein HscB (173 aa).

Residues 2–74 (DYFTLFGLPV…LKRAEYMLSL (73 aa)) enclose the J domain.

This sequence belongs to the HscB family. As to quaternary structure, interacts with HscA and stimulates its ATPase activity. Interacts with IscU.

Co-chaperone involved in the maturation of iron-sulfur cluster-containing proteins. Seems to help targeting proteins to be folded toward HscA. This is Co-chaperone protein HscB from Serratia proteamaculans (strain 568).